A 185-amino-acid chain; its full sequence is Ribosome-recycling factor (185 aa).

The protein belongs to the RRF family.

It is found in the cytoplasm. Responsible for the release of ribosomes from messenger RNA at the termination of protein biosynthesis. May increase the efficiency of translation by recycling ribosomes from one round of translation to another. This Shewanella denitrificans (strain OS217 / ATCC BAA-1090 / DSM 15013) protein is Ribosome-recycling factor.